Here is a 368-residue protein sequence, read N- to C-terminus: Homoserine O-acetyltransferase (368 aa).

The 312-residue stretch at 43–354 folds into the AB hydrolase-1 domain; that stretch reads NVVVVCHALT…DYGHDAFLVE (312 aa). The active-site Nucleophile is Ser-148. Arg-220 contributes to the substrate binding site. Active-site residues include Asp-314 and His-348. Asp-349 provides a ligand contact to substrate.

It belongs to the AB hydrolase superfamily. MetX family. Homodimer.

Its subcellular location is the cytoplasm. It carries out the reaction L-homoserine + acetyl-CoA = O-acetyl-L-homoserine + CoA. Its pathway is amino-acid biosynthesis; L-methionine biosynthesis via de novo pathway; O-acetyl-L-homoserine from L-homoserine: step 1/1. Functionally, transfers an acetyl group from acetyl-CoA to L-homoserine, forming acetyl-L-homoserine. In Sulfurimonas autotrophica (strain ATCC BAA-671 / DSM 16294 / JCM 11897 / OK10), this protein is Homoserine O-acetyltransferase.